Reading from the N-terminus, the 259-residue chain is UPF0246 protein PST_1170 (259 aa).

The protein belongs to the UPF0246 family.

The sequence is that of UPF0246 protein PST_1170 from Stutzerimonas stutzeri (strain A1501) (Pseudomonas stutzeri).